Here is a 981-residue protein sequence, read N- to C-terminus: Mediator of RNA polymerase II transcription subunit 5 (981 aa).

It belongs to the Mediator complex subunit 5 family. In terms of assembly, component of the Mediator complex.

The protein localises to the nucleus. Its function is as follows. Component of the Mediator complex, a coactivator involved in the regulated transcription of nearly all RNA polymerase II-dependent genes. Mediator functions as a bridge to convey information from gene-specific regulatory proteins to the basal RNA polymerase II transcription machinery. Mediator is recruited to promoters by direct interactions with regulatory proteins and serves as a scaffold for the assembly of a functional preinitiation complex with RNA polymerase II and the general transcription factors. The chain is Mediator of RNA polymerase II transcription subunit 5 (NUT1) from Scheffersomyces stipitis (strain ATCC 58785 / CBS 6054 / NBRC 10063 / NRRL Y-11545) (Yeast).